We begin with the raw amino-acid sequence, 382 residues long: POU domain, class 3, transcription factor 2-A (382 aa).

Disordered regions lie at residues 69-136 (PWAT…SSNG), 150-206 (GMIN…TPTS), and 348-382 (EKRM…TSVQ). Residues 122–136 (STGSTHLSSMASSNG) show a composition bias toward polar residues. Positions 165–178 (LRDSHDDHHGDHGH) are enriched in basic and acidic residues. The segment covering 179–194 (QQVSQAQQQHSQLQGG) has biased composition (low complexity). A POU-specific domain is found at 201–275 (EDTPTSDDLE…LLNKWLEEAD (75 aa)). The segment at residues 293-352 (KRKKRTSIEVSVKGALESHFLKCPKPSAPEITSLADSLQLEKEVVRVWFCNRRQKEKRMT) is a DNA-binding region (homeobox).

Belongs to the POU transcription factor family. Class-3 subfamily. In terms of tissue distribution, expressed in the developing brain and spinal cord. Also found in a restricted region of the auditory vesicle during development. In the adult, expression is restricted to the brain.

It localises to the nucleus. Functionally, transcription factor that may be implicated in patterning of the central nervous system during early development. The polypeptide is POU domain, class 3, transcription factor 2-A (pou3f2-a) (Xenopus laevis (African clawed frog)).